The chain runs to 47 residues: Potassium channel toxin TcoKIK (47 aa).

A BetaSPN-type CS-alpha/beta domain is found at 14 to 47; it reads EYACPAIDKFCEDHCAAKKAVGKCDDFKCNCIKL. Intrachain disulfides connect Cys17-Cys37, Cys24-Cys42, and Cys28-Cys44.

Belongs to the long chain scorpion toxin family. Class 2 subfamily. In terms of tissue distribution, expressed by the venom gland.

It is found in the secreted. Its subcellular location is the target cell membrane. Its function is as follows. Blocks voltage-gated potassium channels. Its application (10 uM) to cells recombinantly expressing channels results in membrane damage and cell lysis. The chain is Potassium channel toxin TcoKIK from Tityus costatus (Brazilian scorpion).